We begin with the raw amino-acid sequence, 412 residues long: MNITSPLSAPSHQYPDALGRFGNYGGKYVPETLMPALTELEEAYYRYRAESSFQEELAGLLKDYVGRSSPLYFAERLSAHYARPDGTYPLIYLKREDLNHTGAHKINNALGQVLLAKRMGKKRIIAETGAGQHGVATATVCARFGLECIIYMGVQDMERQKLNVFRMNLLGARVQPVTAGTGTLKDATSEAIRDWVTNVETTHYILGSVAGPHPYPMMVRDFHRVIGQETRQQALKKWGGLPDILLACVGGGSNAMGLFYDFIDEPAVRLIGIEAAGESIVSGKHAATLTMGKPGVLHGAMSYLLQDKEGQVTEAHSISAGLDYPGVGPEHSYLKDAGRAEYYSVTDQEAITALQRLSQLEGIIPALETAHAFAYLETLCPQLKNGERIVINCSGRGDKDVQTVAKYLQMEI.

Position 105 is an N6-(pyridoxal phosphate)lysine (lysine 105).

It belongs to the TrpB family. As to quaternary structure, tetramer of two alpha and two beta chains. It depends on pyridoxal 5'-phosphate as a cofactor.

The catalysed reaction is (1S,2R)-1-C-(indol-3-yl)glycerol 3-phosphate + L-serine = D-glyceraldehyde 3-phosphate + L-tryptophan + H2O. It functions in the pathway amino-acid biosynthesis; L-tryptophan biosynthesis; L-tryptophan from chorismate: step 5/5. Its function is as follows. The beta subunit is responsible for the synthesis of L-tryptophan from indole and L-serine. The sequence is that of Tryptophan synthase beta chain (trpB) from Synechocystis sp. (strain ATCC 27184 / PCC 6803 / Kazusa).